We begin with the raw amino-acid sequence, 327 residues long: Annexin A8 (327 aa).

4 Annexin repeats span residues 21–92, 93–164, 177–249, and 253–324; these read FNPD…ALMY, PPYR…CLLQ, GLAL…TVVK, and NVHS…NLVG. Residues Met-266, Gly-268, Gly-270, and Asp-310 each contribute to the Ca(2+) site.

Belongs to the annexin family.

Functionally, this protein is an anticoagulant protein that acts as an indirect inhibitor of the thromboplastin-specific complex, which is involved in the blood coagulation cascade. The sequence is that of Annexin A8 (Anxa8) from Rattus norvegicus (Rat).